A 189-amino-acid polypeptide reads, in one-letter code: Peptidyl-tRNA hydrolase (189 aa).

Residue Tyr15 coordinates tRNA. His20 (proton acceptor) is an active-site residue. The tRNA site is built by Phe66, Asn68, and Asn114.

It belongs to the PTH family. As to quaternary structure, monomer.

Its subcellular location is the cytoplasm. The catalysed reaction is an N-acyl-L-alpha-aminoacyl-tRNA + H2O = an N-acyl-L-amino acid + a tRNA + H(+). In terms of biological role, hydrolyzes ribosome-free peptidyl-tRNAs (with 1 or more amino acids incorporated), which drop off the ribosome during protein synthesis, or as a result of ribosome stalling. Functionally, catalyzes the release of premature peptidyl moieties from peptidyl-tRNA molecules trapped in stalled 50S ribosomal subunits, and thus maintains levels of free tRNAs and 50S ribosomes. This is Peptidyl-tRNA hydrolase from Streptococcus pyogenes serotype M6 (strain ATCC BAA-946 / MGAS10394).